The primary structure comprises 415 residues: Protein ROH1A (415 aa).

A disordered region spans residues Val184–Ala219. Residues Ser185–Asn195 show a composition bias toward gly residues. The segment covering Arg200–Ala219 has biased composition (low complexity). A helical transmembrane segment spans residues Met263 to Cys283.

It belongs to the ROH1 family. In terms of assembly, interacts with EXO70A1 and EXO70C1. Binds to EXO70C2. In terms of tissue distribution, mainly expressed in cells expanding in a polar manner such as pollen and root hairs.

Its subcellular location is the membrane. The protein localises to the cytoplasm. It is found in the cytosol. Required for seed coat mucilage deposition. In Arabidopsis thaliana (Mouse-ear cress), this protein is Protein ROH1A.